Consider the following 74-residue polypeptide: ATP synthase subunit 9, mitochondrial (74 aa).

The next 2 helical transmembrane spans lie at 16–36 (GLIG…IGVS) and 50–70 (ILGF…AFLL).

Belongs to the ATPase C chain family. F-type ATPases have 2 components, CF(1) - the catalytic core - and CF(0) - the membrane proton channel. CF(1) has five subunits: alpha(3), beta(3), gamma(1), delta(1), epsilon(1). CF(0) has three main subunits: a, b and c.

The protein resides in the mitochondrion inner membrane. Functionally, mitochondrial membrane ATP synthase (F(1)F(0) ATP synthase or Complex V) produces ATP from ADP in the presence of a proton gradient across the membrane which is generated by electron transport complexes of the respiratory chain. F-type ATPases consist of two structural domains, F(1) - containing the extramembraneous catalytic core and F(0) - containing the membrane proton channel, linked together by a central stalk and a peripheral stalk. During catalysis, ATP synthesis in the catalytic domain of F(1) is coupled via a rotary mechanism of the central stalk subunits to proton translocation. Part of the complex F(0) domain. A homomeric c-ring of probably 10 subunits is part of the complex rotary element. In Neurospora crassa (strain ATCC 24698 / 74-OR23-1A / CBS 708.71 / DSM 1257 / FGSC 987), this protein is ATP synthase subunit 9, mitochondrial (atp-9).